A 288-amino-acid chain; its full sequence is Phosphatidylglycerol--prolipoprotein diacylglyceryl transferase (288 aa).

A run of 4 helical transmembrane segments spans residues 8–28, 49–69, 79–99, and 109–129; these read IGPI…FVGI, AFVA…LFNL, ILAV…GIAG, and INPL…QAIG. Arg-130 is a binding site for a 1,2-diacyl-sn-glycero-3-phospho-(1'-sn-glycerol). 3 consecutive transmembrane segments (helical) span residues 203–223, 232–252, and 259–279; these read PAML…WFIL, GYMW…VSFF, and FFNF…SIFF.

It belongs to the Lgt family.

It localises to the cell inner membrane. The enzyme catalyses L-cysteinyl-[prolipoprotein] + a 1,2-diacyl-sn-glycero-3-phospho-(1'-sn-glycerol) = an S-1,2-diacyl-sn-glyceryl-L-cysteinyl-[prolipoprotein] + sn-glycerol 1-phosphate + H(+). The protein operates within protein modification; lipoprotein biosynthesis (diacylglyceryl transfer). Catalyzes the transfer of the diacylglyceryl group from phosphatidylglycerol to the sulfhydryl group of the N-terminal cysteine of a prolipoprotein, the first step in the formation of mature lipoproteins. The chain is Phosphatidylglycerol--prolipoprotein diacylglyceryl transferase from Fusobacterium nucleatum subsp. nucleatum (strain ATCC 25586 / DSM 15643 / BCRC 10681 / CIP 101130 / JCM 8532 / KCTC 2640 / LMG 13131 / VPI 4355).